Reading from the N-terminus, the 275-residue chain is MGIRLYKAYTPGTRNRSISDFKELKNNKPEKSLTSSYHKKQGRNNRGIITIRHRGGGHKKLYRQIDFERNKFNIPGQVKSIEYDPNRNTRISLIHYEDGEKRYILAPRGLNIGDKIISSEEADITIGNTLPLTKIPLGTAIHNIEIKPGKGGQLVRSAGTVAQLIAKEGLVATIRLPSGEVRTIGKNCLATIGQLGNVDSNNRSFGKAGSKRWLGKKPTVRGVVMNPVDHPHGGGEGRAPIGRKRPLTPWGRPALGKKSRKNHKYSDAFIIRRRK.

A disordered region spans residues 224 to 263 (VMNPVDHPHGGGEGRAPIGRKRPLTPWGRPALGKKSRKNH).

The protein belongs to the universal ribosomal protein uL2 family. As to quaternary structure, part of the 50S ribosomal subunit.

Its subcellular location is the plastid. The protein resides in the chloroplast. In Chaetosphaeridium globosum (Charophycean green alga), this protein is Large ribosomal subunit protein uL2c (rpl2).